Here is a 111-residue protein sequence, read N- to C-terminus: Ghrelin (111 aa).

An N-terminal signal peptide occupies residues 1-26; the sequence is MRQMKRTAYIILLVCVLALWMDSVQA. Residues 28–37 show a composition bias toward polar residues; the sequence is SSFLSPSQRP. Residues 28–53 form a disordered region; sequence SSFLSPSQRPQGKDKKPPRVGRRDSD. Ser29 carries the O-decanoyl serine; alternate lipid modification. Ser29 carries the O-hexanoyl serine; alternate lipid modification. Ser29 is lipidated: O-octanoyl serine; alternate. A compositionally biased stretch (basic and acidic residues) spans 38-53; the sequence is QGKDKKPPRVGRRDSD. Position 47 is a valine amide (Val47). The propeptide at 51 to 111 is removed in mature form; the sequence is DSDGILDLFM…DLLMDTPAKE (61 aa).

It belongs to the motilin family. Post-translationally, O-octanoylated by GOAT/MBOAT4. O-octanoylation or O-decanoylation is essential for activity. The O-decanoylated form ghrelin-21-C10 differs in the length of the carbon backbone of the carboxylic acid forming an ester bond with Ser-29. 44% of eel ghrelin is O-decanoylated. In terms of tissue distribution, highest levels in stomach and anterior intestine. Lower levels in posterior intestine, kidney and brain. Low levels in heart, head kidney and middle intestine.

The protein localises to the secreted. In terms of biological role, ligand for growth hormone secretagogue receptor type 1 (GHSR). Induces the release of growth hormone from the pituitary. Has an appetite-stimulating effect, induces adiposity and stimulates gastric acid secretion. Involved in growth regulation. The chain is Ghrelin (ghrl) from Anguilla japonica (Japanese eel).